The chain runs to 79 residues: Small ribosomal subunit protein bS21A (79 aa).

The segment at 57–79 is disordered; sequence LARKKLQREGLLPAPKKVLRPTR.

This sequence belongs to the bacterial ribosomal protein bS21 family.

This chain is Small ribosomal subunit protein bS21A, found in Rhizobium johnstonii (strain DSM 114642 / LMG 32736 / 3841) (Rhizobium leguminosarum bv. viciae).